A 142-amino-acid polypeptide reads, in one-letter code: Large ribosomal subunit protein uL13 (142 aa).

It belongs to the universal ribosomal protein uL13 family. Part of the 50S ribosomal subunit.

Functionally, this protein is one of the early assembly proteins of the 50S ribosomal subunit, although it is not seen to bind rRNA by itself. It is important during the early stages of 50S assembly. The sequence is that of Large ribosomal subunit protein uL13 from Teredinibacter turnerae (strain ATCC 39867 / T7901).